Reading from the N-terminus, the 163-residue chain is Bacterial microcompartment assembly protein PduM (163 aa).

It belongs to the PduM family. Interacts with shell protein PduK.

The protein resides in the bacterial microcompartment. It functions in the pathway polyol metabolism; 1,2-propanediol degradation. Plays an essential role in assembly and/or stability of the bacterial microcompartment (BMC) dedicated to 1,2-propanediol (1,2-PD) degradation. In terms of biological role, expression of a cosmid containing the full 21-gene pdu operon in E.coli allows E.coli to grow on 1,2-propanediol (1,2-PD) with the appearance of bacterial microcompartments (BMC) in its cytoplasm. Its function is as follows. The 1,2-PD-specific bacterial microcompartment (BMC) concentrates low levels of 1,2-PD catabolic enzymes, concentrates volatile reaction intermediates thus enhancing pathway flux and keeps the level of toxic, mutagenic propionaldehyde low. The sequence is that of Bacterial microcompartment assembly protein PduM from Citrobacter freundii.